The sequence spans 183 residues: Endoribonuclease YbeY (183 aa).

Residues His-140, His-144, and His-150 each contribute to the Zn(2+) site.

Belongs to the endoribonuclease YbeY family. Requires Zn(2+) as cofactor.

The protein resides in the cytoplasm. In terms of biological role, single strand-specific metallo-endoribonuclease involved in late-stage 70S ribosome quality control and in maturation of the 3' terminus of the 16S rRNA. This Bradyrhizobium diazoefficiens (strain JCM 10833 / BCRC 13528 / IAM 13628 / NBRC 14792 / USDA 110) protein is Endoribonuclease YbeY.